Here is a 168-residue protein sequence, read N- to C-terminus: Lipoprotein signal peptidase (168 aa).

Transmembrane regions (helical) follow at residues 15–35 (WLWLALVVFLADIGIKFIVME), 47–67 (VLPFFNLLYVHNYGAAFSFLS), 75–95 (WLFTGIAFVVTGLLTYWMSKL), and 107–127 (AMIIGGAIGNVFDRMVHGFVV). Catalysis depends on residues aspartate 128 and aspartate 146. Residues 141–161 (AFNLADTAICLGAAMIILDGF) traverse the membrane as a helical segment.

It belongs to the peptidase A8 family.

It is found in the cell inner membrane. It carries out the reaction Release of signal peptides from bacterial membrane prolipoproteins. Hydrolyzes -Xaa-Yaa-Zaa-|-(S,diacylglyceryl)Cys-, in which Xaa is hydrophobic (preferably Leu), and Yaa (Ala or Ser) and Zaa (Gly or Ala) have small, neutral side chains.. It participates in protein modification; lipoprotein biosynthesis (signal peptide cleavage). Functionally, this protein specifically catalyzes the removal of signal peptides from prolipoproteins. This chain is Lipoprotein signal peptidase, found in Vibrio vulnificus (strain CMCP6).